Consider the following 114-residue polypeptide: Non-specific lipid-transfer protein 1 (114 aa).

The first 23 residues, Met-1 to Glu-23, serve as a signal peptide directing secretion. 4 cysteine pairs are disulfide-bonded: Cys-27–Cys-73, Cys-37–Cys-50, Cys-51–Cys-96, and Cys-71–Cys-110.

It belongs to the plant LTP family. High expression in leaf epidermis and shoot apex, and also in root epidermis during seedling germination.

Functionally, plant non-specific lipid-transfer proteins transfer phospholipids as well as galactolipids across membranes. Binds cis-unsaturated fatty acids and jasmonic acid with a higher affinity than linear chain fatty acids. Formation of the complex with jasmonic acid results in a conformational change facilitating the LPT1 binding on the elicitin plasma membrane receptor that is known to be involved in plant defense induction. May also play a role in wax or cutin deposition in the cell walls of expanding epidermal cells and certain secretory tissues. This is Non-specific lipid-transfer protein 1 (LTP1) from Nicotiana tabacum (Common tobacco).